The following is a 1196-amino-acid chain: Protein BRASSINOSTEROID INSENSITIVE 1 (1196 aa).

The first 23 residues, 1-23, serve as a signal peptide directing secretion; it reads MKTFSSFFLSVTTLFFFSFFSLS. Positions 62-69 match the Cys pair 1 motif; sequence CTFDGVTC. LRR repeat units lie at residues 71–98, 99–121, 122–146, 148–169, 172–197, 199–221, 222–244, 245–268, 269–290, 291–314, 316–338, 339–363, 364–388, 390–413, 415–439, 441–463, 464–487, 488–511, 513–535, 536–559, and 561–583; these read DDKV…LLSL, TGLE…FKCS, ASLT…SLGS, SGLK…VSGG, LNSL…VLSD, CGEL…VSRC, VNLE…LGDC, SALQ…ISTC, TELK…PLPL, KSLQ…LSGA, DTLT…FFGS, CSLL…TLLK, MRGL…LTNL, ASLL…LCQN, KNTL…LSNC, ELVS…LGSL, SKLR…LMYV, KTLE…LSNC, NLNW…IGRL, ENLA…LGDC, and SLIW…MFKQ. The N-linked (GlcNAc...) asparagine glycan is linked to Asn-112. Residue Asn-154 is glycosylated (N-linked (GlcNAc...) asparagine). A glycan (N-linked (GlcNAc...) asparagine) is linked at Asn-233. Asn-275 is a glycosylation site (N-linked (GlcNAc...) asparagine). Asn-351, Asn-387, Asn-401, and Asn-438 each carry an N-linked (GlcNAc...) asparagine glycan. N-linked (GlcNAc...) asparagine glycosylation is present at Asn-510. 2 N-linked (GlcNAc...) asparagine glycosylation sites follow: Asn-545 and Asn-573. Position 597 (Tyr-597) interacts with brassinolide. Asn-636 is a glycosylation site (N-linked (GlcNAc...) asparagine). Positions 640–642 are SERK1 binding; the sequence is RVY. Residues Tyr-642 and Ser-647 each coordinate brassinolide. N-linked (GlcNAc...) asparagine glycosylation is present at Asn-653. 4 LRR repeats span residues 653-677, 678-701, 702-725, and 727-750; these read NGSM…IGSM, PYLF…VGDL, RGLN…MSAL, and MLTE…QFET. Asn-705 contributes to the brassinolide binding site. The SERK1 binding stretch occupies residues 726–729; it reads TMLT. N-linked (GlcNAc...) asparagine glycosylation is present at Asn-737. Residues 746–750 form an SERK1 binding region; sequence GQFET. The short motif at 763–770 is the Cys pair 2 element; sequence CGYPLPRC. The helical transmembrane segment at 793-813 threads the bilayer; it reads AGSVAMGLLFSFVCIFGLILV. Tyr-831 is subject to Phosphotyrosine. Ser-838 bears the Phosphoserine mark. Phosphothreonine is present on residues Thr-842, Thr-846, and Thr-851. Phosphoserine is present on Ser-858. 2 positions are modified to phosphothreonine: Thr-872 and Thr-880. The Protein kinase domain maps to 883 to 1158; sequence FHNDSLIGSG…VQVMAMFKEI (276 aa). 2 positions are modified to phosphoserine: Ser-887 and Ser-891. ATP contacts are provided by residues 889–897 and Lys-911; that span reads IGSGGFGDV. At Tyr-956 the chain carries Phosphotyrosine. ATP is bound by residues 957 to 959 and 963 to 966; these read EFM and SLED. Ser-981 bears the Phosphoserine mark. Position 982 is a phosphothreonine (Thr-982). Asp-1009 functions as the Proton acceptor in the catalytic mechanism. Residues 1009-1014 and Asp-1027 contribute to the ATP site; that span reads DMKSSN. Ser-1035 carries the post-translational modification Phosphoserine. Thr-1039 is subject to Phosphothreonine. Ser-1042 and Ser-1044 each carry phosphoserine. Residues Thr-1045 and Thr-1049 each carry the phosphothreonine modification. At Tyr-1052 the chain carries Phosphotyrosine. At Ser-1060 the chain carries Phosphoserine. Position 1072 is a phosphotyrosine (Tyr-1072). Residues Ser-1166 and Ser-1168 each carry the phosphoserine modification. Residue Thr-1169 is modified to Phosphothreonine. Ser-1172 and Ser-1179 each carry phosphoserine. Residue Thr-1180 is modified to Phosphothreonine. Position 1187 is a phosphoserine (Ser-1187).

Belongs to the protein kinase superfamily. Ser/Thr protein kinase family. As to quaternary structure, monomer or homodimer in the plasma membrane. Heterodimer with BAK1 in the endosomes. Interacts with SERK1 and TTL in a kinase-dependent manner. Bind to SERK1 in a brassinolide-dependent manner. Component of the SERK1 signaling complex, composed of KAPP, CDC48A, GRF6 or GRF7, SERK1, SERK2, SERK3/BAK1 and BRI1. Interacts with CDG1. No interactions with PSKR1 or CNGC17. Interacts with BIK1. Interacts with B'ALPHA, B'BETA, B'GAMMA and B'ETA. Interacts with BSK1 and BSK3. Interacts with BSK5, BSK6 and BSK11. In terms of processing, autophosphorylated on Tyr-831, Tyr-956 and maybe Tyr-1072. Phosphorylated on at least 12 sites, with a preference for Ser residues. Transphosphorylated on Ser-887 by SERK1 and on Ser-838, Thr-846, Ser-858 and Ser-1166 by BAK1. Phosphorylation on Ser-1166 enhances the kinase activity. Post-translationally, glycosylated. As to expression, expressed ubiquitously.

It localises to the cell membrane. The protein localises to the endosome membrane. It catalyses the reaction L-seryl-[protein] + ATP = O-phospho-L-seryl-[protein] + ADP + H(+). The enzyme catalyses L-threonyl-[protein] + ATP = O-phospho-L-threonyl-[protein] + ADP + H(+). It carries out the reaction L-tyrosyl-[protein] + ATP = O-phospho-L-tyrosyl-[protein] + ADP + H(+). Activated by Ser and Thr phosphorylation. Its function is as follows. Receptor with a dual specificity kinase activity acting on both serine/threonine- and tyrosine-containing substrates. Regulates, in response to brassinosteroid binding, a signaling cascade involved in plant development, including expression of light- and stress-regulated genes, promotion of cell elongation, normal leaf and chloroplast senescence, and flowering. Binds brassinolide (BL), and less effectively castasterone (CS), but not 2,3,22,23-O-tetramethylbrassinolide or ecdysone. May be involved in a feedback regulation of brassinosteroid biosynthesis. Phosphorylates BRI1-associated receptor kinase 1 (BAK1), Transthyretin-Like protein (TTL) and SERK1 on 'Ser-299' and 'Thr-462' in vitro. May have a guanylyl cyclase activity. Phosphorylates BSK1, BSK2 and BSK3 in vitro. Phosphorylates BSK1, BSK3, BSK5, BSK6, BSK8 and BSK11 in vitro. This Arabidopsis thaliana (Mouse-ear cress) protein is Protein BRASSINOSTEROID INSENSITIVE 1.